Consider the following 336-residue polypeptide: Anthranilate phosphoribosyltransferase (336 aa).

5-phospho-alpha-D-ribose 1-diphosphate is bound by residues Gly-82, 85-86 (GD), Thr-90, 92-95 (NVST), 110-118 (KHGNRSVSS), and Ser-122. Gly-82 is an anthranilate binding site. A Mg(2+)-binding site is contributed by Ser-94. An anthranilate-binding site is contributed by Asn-113. Arg-168 contributes to the anthranilate binding site. The Mg(2+) site is built by Asp-227 and Glu-228.

The protein belongs to the anthranilate phosphoribosyltransferase family. As to quaternary structure, homodimer. It depends on Mg(2+) as a cofactor.

The enzyme catalyses N-(5-phospho-beta-D-ribosyl)anthranilate + diphosphate = 5-phospho-alpha-D-ribose 1-diphosphate + anthranilate. The protein operates within amino-acid biosynthesis; L-tryptophan biosynthesis; L-tryptophan from chorismate: step 2/5. In terms of biological role, catalyzes the transfer of the phosphoribosyl group of 5-phosphorylribose-1-pyrophosphate (PRPP) to anthranilate to yield N-(5'-phosphoribosyl)-anthranilate (PRA). This chain is Anthranilate phosphoribosyltransferase, found in Leptospira borgpetersenii serovar Hardjo-bovis (strain JB197).